The primary structure comprises 113 residues: Large ribosomal subunit protein uL24 (113 aa).

It belongs to the universal ribosomal protein uL24 family. In terms of assembly, part of the 50S ribosomal subunit.

In terms of biological role, one of two assembly initiator proteins, it binds directly to the 5'-end of the 23S rRNA, where it nucleates assembly of the 50S subunit. Its function is as follows. One of the proteins that surrounds the polypeptide exit tunnel on the outside of the subunit. The polypeptide is Large ribosomal subunit protein uL24 (Rickettsia prowazekii (strain Madrid E)).